A 576-amino-acid chain; its full sequence is Glucose-6-phosphate 1-dehydrogenase 1, chloroplastic (576 aa).

The N-terminal 50 residues, 1–50 (MATHSMIIPSPSSSSSSLATAASPFKETLPLFSRSLTFPRKSLFSQVRLR), are a transit peptide targeting the chloroplast. Residues 97 to 104 (GASGDLAK) and Arg131 each bind NADP(+). A disulfide bridge connects residues Cys149 and Cys157. An NADP(+)-binding site is contributed by Lys234. D-glucose 6-phosphate contacts are provided by residues Lys234, 264–268 (HYLGK), Glu302, and Asp321. The active-site Proton acceptor is His326. Lys419 serves as a coordination point for NADP(+). Lys422 and Arg427 together coordinate D-glucose 6-phosphate. 2 residues coordinate NADP(+): Arg432 and Arg461. Gln463 serves as a coordination point for D-glucose 6-phosphate. NADP(+) is bound by residues 469 to 471 (YLR) and Arg554.

It belongs to the glucose-6-phosphate dehydrogenase family. As to quaternary structure, forms homodimer. Interacts with G6PD2, G6PD3 and G6PD4. Expressed in leaves, stems, buds, flowers and siliques.

The protein localises to the plastid. The protein resides in the chloroplast stroma. It localises to the peroxisome. The catalysed reaction is D-glucose 6-phosphate + NADP(+) = 6-phospho-D-glucono-1,5-lactone + NADPH + H(+). It functions in the pathway carbohydrate degradation; pentose phosphate pathway; D-ribulose 5-phosphate from D-glucose 6-phosphate (oxidative stage): step 1/3. Regulated by metabolites. Post-translationally inactivated by cysteine-mediated redox modification via the ferredoxin-thioredoxin system in the light and this avoids futile cycles with photosynthetic CO2 fixation. Its function is as follows. Catalyzes the rate-limiting step of the oxidative pentose-phosphate pathway, which represents a route for the dissimilation of carbohydrates besides glycolysis. The main function of this enzyme is to provide reducing power (NADPH) and pentose phosphates for fatty acid and nucleic acid synthesis which are involved in membrane synthesis and cell division. The polypeptide is Glucose-6-phosphate 1-dehydrogenase 1, chloroplastic (Arabidopsis thaliana (Mouse-ear cress)).